The sequence spans 473 residues: Cholesterol 22-monohydroxylase CYP90B52 (473 aa).

Residues Glu-2–Ile-22 traverse the membrane as a helical segment. A heme-binding site is contributed by Cys-422.

It belongs to the cytochrome P450 family. Mainly expressed in leaves and roots and, at low levels, in fruits and stems.

It localises to the membrane. It catalyses the reaction cholesterol + reduced [NADPH--hemoprotein reductase] + O2 = (22S)-22-hydroxycholesterol + oxidized [NADPH--hemoprotein reductase] + H2O + H(+). Its pathway is steroid metabolism; cholesterol metabolism. Its function is as follows. Canonical brassinosteroid (BR)-biosynthetic enzyme capable of converting cholesterol to 22S-hydroxycholesterol via sterol-C22 hydroxylation. The polypeptide is Cholesterol 22-monohydroxylase CYP90B52 (Paris polyphylla (Daiswa polyphylla)).